The chain runs to 453 residues: Probable 1,4-beta-D-glucan cellobiohydrolase A (453 aa).

The N-terminal stretch at 1–17 (MYQRALLFSALATAVSA) is a signal peptide. The Nucleophile role is filled by Glu226. The active-site Proton donor is the Glu231. An N-linked (GlcNAc...) asparagine glycan is attached at Asn284.

Belongs to the glycosyl hydrolase 7 (cellulase C) family.

It localises to the secreted. The enzyme catalyses Hydrolysis of (1-&gt;4)-beta-D-glucosidic linkages in cellulose and cellotetraose, releasing cellobiose from the non-reducing ends of the chains.. Functionally, the biological conversion of cellulose to glucose generally requires three types of hydrolytic enzymes: (1) Endoglucanases which cut internal beta-1,4-glucosidic bonds; (2) Exocellobiohydrolases that cut the disaccharide cellobiose from the non-reducing end of the cellulose polymer chain; (3) Beta-1,4-glucosidases which hydrolyze the cellobiose and other short cello-oligosaccharides to glucose. This chain is Probable 1,4-beta-D-glucan cellobiohydrolase A (cbhA), found in Aspergillus clavatus (strain ATCC 1007 / CBS 513.65 / DSM 816 / NCTC 3887 / NRRL 1 / QM 1276 / 107).